A 138-amino-acid polypeptide reads, in one-letter code: Small ribosomal subunit protein uS9 (138 aa).

The protein belongs to the universal ribosomal protein uS9 family.

This is Small ribosomal subunit protein uS9 (rps9) from Sulfolobus acidocaldarius (strain ATCC 33909 / DSM 639 / JCM 8929 / NBRC 15157 / NCIMB 11770).